The primary structure comprises 436 residues: Glutamyl-tRNA reductase (436 aa).

Residues 52 to 55 (TCHR), serine 105, 110 to 112 (EDQ), and glutamine 116 contribute to the substrate site. Cysteine 53 functions as the Nucleophile in the catalytic mechanism. Residue 184–189 (GAGEMG) coordinates NADP(+).

This sequence belongs to the glutamyl-tRNA reductase family. Homodimer.

The catalysed reaction is (S)-4-amino-5-oxopentanoate + tRNA(Glu) + NADP(+) = L-glutamyl-tRNA(Glu) + NADPH + H(+). It functions in the pathway porphyrin-containing compound metabolism; protoporphyrin-IX biosynthesis; 5-aminolevulinate from L-glutamyl-tRNA(Glu): step 1/2. Catalyzes the NADPH-dependent reduction of glutamyl-tRNA(Glu) to glutamate 1-semialdehyde (GSA). This chain is Glutamyl-tRNA reductase, found in Halobacterium salinarum (strain ATCC 29341 / DSM 671 / R1).